We begin with the raw amino-acid sequence, 381 residues long: Gas vesicle protein C (381 aa).

7 tandem repeats follow at residues 22-59 (QAFA…NSTN), 60-84 (DAFR…ADRR), 85-122 (DAFD…DETH), 123-160 (EAFD…VSVQ), 161-192 (GEFN…KDVA), 193-232 (DAFL…ETTE), and 233-274 (EAFA…IPPI). The segment at 22–274 (QAFAAYADEF…TETEVDIPPI (253 aa)) is 7 X approximate tandem repeats. Positions 261 to 333 (AVTGTETEVD…EDDQFLDDET (73 aa)) are disordered. Positions 276-318 (DSVEPDGEDEDSKADDVEAEAEVETVEMEFGAEMDTEADEDVQ) are enriched in acidic residues.

It belongs to the halobacterial gas vesicle GvpC family. Post-translationally, detected as 2 slightly different sizes in vivo; the proteins appears larger in SDS-PAGE probably due to the acidic tail.

The protein resides in the gas vesicle. Its function is as follows. Confers stability, involved in shaping gas vesicles (GV), hollow, gas filled proteinaceous nanostructures found in some microorganisms. They allow positioning of halobacteria at the optimal depth for growth in the poorly aerated, shallow brine pools of their habitat. Functionally, expression of a 9.5 kb mc-vac DNA fragment containing 2 divergently transcribed regions (gvpD-gvpE-gvpF-gvpG-gvpH-gvpI-gvpJ-gvpK-gvpL-gvpM and gvpA-gvpC-gvpN-gvpO) allows H.volcanii to produce gas vesicles. The chain is Gas vesicle protein C from Haloferax mediterranei (strain ATCC 33500 / DSM 1411 / JCM 8866 / NBRC 14739 / NCIMB 2177 / R-4) (Halobacterium mediterranei).